Here is a 339-residue protein sequence, read N- to C-terminus: Transcription initiation factor IIB (339 aa).

The TFIIB-type zinc finger occupies 39–70; it reads EELICPVCGSKNIIKDYERAEIVCEMCGCVLQ. Residues Cys-43, Cys-46, Cys-62, and Cys-65 each coordinate Zn(2+). A run of 2 repeats spans residues 156–239 and 250–331.

It belongs to the TFIIB family.

Stabilizes TBP binding to an archaeal box-A promoter. Also responsible for recruiting RNA polymerase II to the pre-initiation complex (DNA-TBP-TFIIB). In Methanococcus maripaludis (strain C6 / ATCC BAA-1332), this protein is Transcription initiation factor IIB.